A 276-amino-acid chain; its full sequence is Expansin-A25 (276 aa).

A signal peptide spans 1–27 (MKLLEQMVYVECFMIIMATLLVSMSYG). Residues 73–183 (QGACGYGDLF…RRISCARTGG (111 aa)) enclose the Expansin-like EG45 domain. An Expansin-like CBD domain is found at 193 to 272 (YFLMILPYNV…NWGFGQTFDG (80 aa)).

Belongs to the expansin family. Expansin A subfamily.

The protein localises to the secreted. The protein resides in the cell wall. It localises to the membrane. Causes loosening and extension of plant cell walls by disrupting non-covalent bonding between cellulose microfibrils and matrix glucans. No enzymatic activity has been found. The polypeptide is Expansin-A25 (EXPA25) (Arabidopsis thaliana (Mouse-ear cress)).